The following is a 274-amino-acid chain: Carboxy-S-adenosyl-L-methionine synthase (274 aa).

Residues Tyr-59, 93 to 95 (GCS), 149 to 150 (DI), Asn-164, and Arg-231 each bind S-adenosyl-L-methionine.

The protein belongs to the class I-like SAM-binding methyltransferase superfamily. Cx-SAM synthase family. In terms of assembly, homodimer.

It catalyses the reaction prephenate + S-adenosyl-L-methionine = carboxy-S-adenosyl-L-methionine + 3-phenylpyruvate + H2O. In terms of biological role, catalyzes the conversion of S-adenosyl-L-methionine (SAM) to carboxy-S-adenosyl-L-methionine (Cx-SAM). The chain is Carboxy-S-adenosyl-L-methionine synthase from Psychrobacter sp. (strain PRwf-1).